Consider the following 98-residue polypeptide: ESAT-6-like protein EsxK (98 aa).

It belongs to the WXG100 family. CFP-10 subfamily. As to quaternary structure, strongly interacts with EsxL to form a heterodimeric complex under reducing conditions. The complex is regulated by the redox state of EsxL.

The protein resides in the secreted. In Mycobacterium tuberculosis (strain ATCC 25618 / H37Rv), this protein is ESAT-6-like protein EsxK.